The primary structure comprises 98 residues: UPF0473 protein LAR_0522 (98 aa).

The protein belongs to the UPF0473 family.

This is UPF0473 protein LAR_0522 from Limosilactobacillus reuteri subsp. reuteri (strain JCM 1112) (Lactobacillus reuteri).